A 346-amino-acid polypeptide reads, in one-letter code: Coproporphyrin III ferrochelatase (346 aa).

S52 and Y121 together coordinate Fe-coproporphyrin III. Fe(2+) contacts are provided by H181 and E264.

Belongs to the ferrochelatase family.

The protein localises to the cytoplasm. The enzyme catalyses Fe-coproporphyrin III + 2 H(+) = coproporphyrin III + Fe(2+). Its pathway is porphyrin-containing compound metabolism; protoheme biosynthesis. In terms of biological role, involved in coproporphyrin-dependent heme b biosynthesis. Catalyzes the insertion of ferrous iron into coproporphyrin III to form Fe-coproporphyrin III. This is Coproporphyrin III ferrochelatase from Mycobacterium sp. (strain KMS).